A 554-amino-acid chain; its full sequence is MTRRDTTRVIRPATGPERTCKSWLTEAALRMLMNNLHPDVAERPEELVVYGGIGRAARDWESYDKIVETLRRLEDDETLLVQSGKPVGVFRTHADAPRVLIANSNLVPRWASWEHFNELDRKGLAMYGQMTAGSWIYIGAQGIVQGTYETFVEMGRQHYGGDLSGRWLLTAGLGGMGGAQPLAAVMAGAACLAIECQPSSIEMRLRTGYLDRSTDKVEEALAWIEESCAAKTPISVGLLGNAAELLPELFKRGVRPDLLTDQTSAHDPVNGYLPAGWSLERWHAMRDQDPPQVAEAAKASMAAHVKAMLDFQAAGVPTVDYGNNIRQMALEEGVTNAFDFPGFVPAYIRPLFCRGVGPFRWAALSGDPEDIAKTDAKVKELIPDNPHLHNWLDMAGQKIRFQGLPARICWVGLGDRHRLGLAFNEMVAKGELKAPIVIGRDHLDSGSVASPNRETEAMRDGSDAVSDWPLLNALLNTASGATWVSLHHGGGVGMGFSQHAGMVIVCDGTEAAAKRVARVLWNDPATGVMRHADAGYDIALACAREKGLDLPGIL.

NAD(+)-binding positions include 51 to 52 (GG), Gln129, 175 to 177 (GMG), Glu195, 241 to 242 (NA), 262 to 266 (QTSAH), 272 to 273 (YL), and Tyr321. Cys409 is an active-site residue. Gly491 contacts NAD(+).

Belongs to the urocanase family. NAD(+) serves as cofactor.

The protein localises to the cytoplasm. It catalyses the reaction 4-imidazolone-5-propanoate = trans-urocanate + H2O. Its pathway is amino-acid degradation; L-histidine degradation into L-glutamate; N-formimidoyl-L-glutamate from L-histidine: step 2/3. Functionally, catalyzes the conversion of urocanate to 4-imidazolone-5-propionate. In Caulobacter vibrioides (strain ATCC 19089 / CIP 103742 / CB 15) (Caulobacter crescentus), this protein is Urocanate hydratase.